The sequence spans 185 residues: Peptidyl-tRNA hydrolase (185 aa).

TRNA is bound at residue Phe-14. Catalysis depends on His-19, which acts as the Proton acceptor. Residues Tyr-64, Asn-66, and Asn-112 each coordinate tRNA.

This sequence belongs to the PTH family. As to quaternary structure, monomer.

Its subcellular location is the cytoplasm. It catalyses the reaction an N-acyl-L-alpha-aminoacyl-tRNA + H2O = an N-acyl-L-amino acid + a tRNA + H(+). Its function is as follows. Hydrolyzes ribosome-free peptidyl-tRNAs (with 1 or more amino acids incorporated), which drop off the ribosome during protein synthesis, or as a result of ribosome stalling. In terms of biological role, catalyzes the release of premature peptidyl moieties from peptidyl-tRNA molecules trapped in stalled 50S ribosomal subunits, and thus maintains levels of free tRNAs and 50S ribosomes. The sequence is that of Peptidyl-tRNA hydrolase from Exiguobacterium sp. (strain ATCC BAA-1283 / AT1b).